The primary structure comprises 518 residues: Gypsy retrotransposon integrase-like protein 1 (518 aa).

In terms of domain architecture, Integrase catalytic spans 130–292; that stretch reads QQHLPMVGNP…TPYFQMFNRN (163 aa). Ser-498 is subject to Phosphoserine.

This is Gypsy retrotransposon integrase-like protein 1 (Gin1) from Mus musculus (Mouse).